The following is a 187-amino-acid chain: Ubiquinone biosynthesis protein COQ4 homolog, mitochondrial (187 aa).

Zn(2+)-binding residues include His77, Asp78, His81, and Glu93.

It belongs to the COQ4 family. Component of a multi-subunit COQ enzyme complex. Zn(2+) is required as a cofactor.

Its subcellular location is the mitochondrion inner membrane. The catalysed reaction is a 4-hydroxy-3-methoxy-5-(all-trans-polyprenyl)benzoate + H(+) = a 2-methoxy-6-(all-trans-polyprenyl)phenol + CO2. It participates in cofactor biosynthesis; ubiquinone biosynthesis. In terms of biological role, lyase that catalyzes the C1-decarboxylation of 4-hydroxy-3-methoxy-5-(all-trans-polyprenyl)benzoic acid into 2-methoxy-6-(all-trans-polyprenyl)phenol during ubiquinone biosynthesis. In Leishmania infantum, this protein is Ubiquinone biosynthesis protein COQ4 homolog, mitochondrial.